The primary structure comprises 363 residues: MIWPALRWTLFHLDPERAHRLAHGALHRVPPGLARLRRPAVPPELRVSCLGLDFDGPIGLAAGFDKGDASIAGLFALGFSHVEIGTITPRPQAGNEPPRLFRLVEHRALVNRMGFNNAGAEVCARRLAGVPATARMGPVGVNVGKNKTTPNEDAAADYLACIDRLHPYADYLVVNISSPNTPGLRQLQERDQLDALLRACAGRLRERAPGKPLLVKLAPDLSPTALDEAVDVAIDAGVSGIVATNTTLSRAGVERHPRAREAGGLSGAPLEALATSVVRRCYIRAAGRVPIVGCGGVMNAEGAYAKIRAGATLVQVYTGLVYGGPGFVRRLNDGLARLLARDGFRTVAEAVGADVETAERAGV.

Residues 62–66 (AGFDK) and T86 contribute to the FMN site. K66 is a binding site for substrate. 111–115 (NRMGF) lines the substrate pocket. FMN is bound by residues N142 and N175. N175 serves as a coordination point for substrate. The Nucleophile role is filled by S178. N180 provides a ligand contact to substrate. FMN is bound by residues K216 and T244. 245 to 246 (NT) serves as a coordination point for substrate. Residues G267, G296, and 317-318 (YT) each bind FMN.

The protein belongs to the dihydroorotate dehydrogenase family. Type 2 subfamily. Monomer. It depends on FMN as a cofactor.

It localises to the cell membrane. It carries out the reaction (S)-dihydroorotate + a quinone = orotate + a quinol. Its pathway is pyrimidine metabolism; UMP biosynthesis via de novo pathway; orotate from (S)-dihydroorotate (quinone route): step 1/1. In terms of biological role, catalyzes the conversion of dihydroorotate to orotate with quinone as electron acceptor. The sequence is that of Dihydroorotate dehydrogenase (quinone) from Anaeromyxobacter sp. (strain Fw109-5).